The chain runs to 274 residues: SPbeta prophage-derived uncharacterized protein YomD (274 aa).

This Bacillus subtilis (strain 168) protein is SPbeta prophage-derived uncharacterized protein YomD (yomD).